The sequence spans 823 residues: Transcription factor SPT20 homolog-like 1 (823 aa).

Disordered regions lie at residues 246–273 (SVKPQQEQSDCPPPPELRVSTSGQKEER), 369–524 (PRKK…AAQP), 560–601 (GSSF…AVQA), 631–669 (VLTGPQQQSHQLVSLQQLQQPTAAHPPQPGPQGSALGLS), and 720–757 (LRQQQPQPQPPKLQLQPQWQPKPRQEQPQSQQQQPQHI). Residues 423–440 (SHSSSGPASVSQLSSWKT) show a composition bias toward polar residues. 3 stretches are compositionally biased toward low complexity: residues 469 to 509 (SSSG…QKPS), 568 to 582 (APGSGAPAPAGISGS), and 636 to 650 (QQQSHQLVSLQQLQQ).

It belongs to the SPT20 family.

In Homo sapiens (Human), this protein is Transcription factor SPT20 homolog-like 1 (SUPT20HL1).